The following is a 209-amino-acid chain: Ribosomal RNA large subunit methyltransferase E (209 aa).

5 residues coordinate S-adenosyl-L-methionine: Gly-63, Trp-65, Asp-83, Asp-99, and Asp-124. Lys-164 functions as the Proton acceptor in the catalytic mechanism.

Belongs to the class I-like SAM-binding methyltransferase superfamily. RNA methyltransferase RlmE family.

It is found in the cytoplasm. It carries out the reaction uridine(2552) in 23S rRNA + S-adenosyl-L-methionine = 2'-O-methyluridine(2552) in 23S rRNA + S-adenosyl-L-homocysteine + H(+). Specifically methylates the uridine in position 2552 of 23S rRNA at the 2'-O position of the ribose in the fully assembled 50S ribosomal subunit. The polypeptide is Ribosomal RNA large subunit methyltransferase E (Pectobacterium atrosepticum (strain SCRI 1043 / ATCC BAA-672) (Erwinia carotovora subsp. atroseptica)).